A 77-amino-acid chain; its full sequence is Acyl carrier protein (77 aa).

In terms of domain architecture, Carrier spans Ser2–Thr77. Ser37 is subject to O-(pantetheine 4'-phosphoryl)serine.

The protein belongs to the acyl carrier protein (ACP) family. Post-translationally, 4'-phosphopantetheine is transferred from CoA to a specific serine of apo-ACP by AcpS. This modification is essential for activity because fatty acids are bound in thioester linkage to the sulfhydryl of the prosthetic group.

The protein localises to the cytoplasm. The protein operates within lipid metabolism; fatty acid biosynthesis. Its function is as follows. Carrier of the growing fatty acid chain in fatty acid biosynthesis. This Marinobacter nauticus (strain ATCC 700491 / DSM 11845 / VT8) (Marinobacter aquaeolei) protein is Acyl carrier protein.